The primary structure comprises 520 residues: Type I restriction enzyme EcoprrI methylase subunit (520 aa).

S-adenosyl-L-methionine-binding positions include 198 to 203 (EFFTPQ), 230 to 232 (SGS), and Glu-254.

The protein belongs to the N(4)/N(6)-methyltransferase family. The type I restriction/modification system is composed of three polypeptides R, M and S; the restriction enzyme has stoichiometry R(2)M(2)S(1) while the methyltransferase is M(2)S(1).

The enzyme catalyses a 2'-deoxyadenosine in DNA + S-adenosyl-L-methionine = an N(6)-methyl-2'-deoxyadenosine in DNA + S-adenosyl-L-homocysteine + H(+). In terms of biological role, the subtype gamma methyltransferase (M) subunit of a type I restriction enzyme. The M and S subunits together form a methyltransferase (MTase) that methylates two adenine residues of the sequence 5'-CCAN(7)ATGC-3'. In the presence of the R subunit the complex can also act as an endonuclease, binding to the same target sequence but cutting the DNA some distance from this site. Whether the DNA is cut or modified depends on the methylation state of the target sequence. When the target site is unmodified, the DNA is cut. When the target site is hemimethylated, the complex acts as a maintenance MTase modifying the DNA so that both strands become methylated. After locating a non-methylated recognition site, the enzyme complex serves as a molecular motor that translocates DNA in an ATP-dependent manner until a collision occurs that triggers cleavage. This chain is Type I restriction enzyme EcoprrI methylase subunit, found in Escherichia coli.